Here is a 356-residue protein sequence, read N- to C-terminus: Fructose import permease protein FruF (356 aa).

Helical transmembrane passes span 25–45 (IVAF…FLAL), 77–97 (LVIS…VAGA), 113–133 (ILIA…LVSF), 180–200 (FILG…LVGL), 231–251 (ILFL…LFAT), 268–290 (MYAI…SLAG), and 308–328 (LGVN…VICV).

This sequence belongs to the binding-protein-dependent transport system permease family. As to quaternary structure, the complex is composed of an ATP-binding protein (FruK), two transmembrane proteins (FruF and FruG) and a solute-binding protein (FruE).

The protein localises to the cell membrane. Part of the high-affinity ABC transporter complex FruEKFG involved in fructose uptake. Can also transport ribose and xylose, with lower affinity. Probably responsible for the translocation of the substrate across the membrane. In Bifidobacterium longum (strain NCC 2705), this protein is Fructose import permease protein FruF.